We begin with the raw amino-acid sequence, 157 residues long: Protein-export protein SecB (157 aa).

It belongs to the SecB family. Homotetramer, a dimer of dimers. One homotetramer interacts with 1 SecA dimer.

It localises to the cytoplasm. Functionally, one of the proteins required for the normal export of preproteins out of the cell cytoplasm. It is a molecular chaperone that binds to a subset of precursor proteins, maintaining them in a translocation-competent state. It also specifically binds to its receptor SecA. This Magnetococcus marinus (strain ATCC BAA-1437 / JCM 17883 / MC-1) protein is Protein-export protein SecB.